The following is a 443-amino-acid chain: ATP-dependent protease ATPase subunit HslU (443 aa).

ATP-binding positions include I18, 60-65 (GVGKTE), D256, E321, and R393.

The protein belongs to the ClpX chaperone family. HslU subfamily. A double ring-shaped homohexamer of HslV is capped on each side by a ring-shaped HslU homohexamer. The assembly of the HslU/HslV complex is dependent on binding of ATP.

The protein resides in the cytoplasm. In terms of biological role, ATPase subunit of a proteasome-like degradation complex; this subunit has chaperone activity. The binding of ATP and its subsequent hydrolysis by HslU are essential for unfolding of protein substrates subsequently hydrolyzed by HslV. HslU recognizes the N-terminal part of its protein substrates and unfolds these before they are guided to HslV for hydrolysis. The chain is ATP-dependent protease ATPase subunit HslU from Escherichia fergusonii (strain ATCC 35469 / DSM 13698 / CCUG 18766 / IAM 14443 / JCM 21226 / LMG 7866 / NBRC 102419 / NCTC 12128 / CDC 0568-73).